Reading from the N-terminus, the 94-residue chain is Small ubiquitin-related modifier 3 (94 aa).

K11 participates in a covalent cross-link: Glycyl lysine isopeptide (Lys-Gly) (interchain with G-Cter in SUMO). A Ubiquitin-like domain is found at 15-92 (DHINLKVAGQ…IDVFQQQTGG (78 aa)). A Glycyl lysine isopeptide (Gly-Lys) (interchain with K-? in acceptor proteins) cross-link involves residue G92. The propeptide occupies 93-94 (SC).

It belongs to the ubiquitin family. SUMO subfamily. Interacts with sae2 and ube2i. Covalently attached to a number of proteins. Polymeric chains can be formed through Lys-11 cross-linking. Post-translationally, cleavage of precursor form by a sentrin-specific protease is necessary for function.

The protein localises to the cytoplasm. Its subcellular location is the nucleus. It is found in the PML body. Its function is as follows. Ubiquitin-like protein which can be covalently attached to target lysines either as a monomer or as a lysine-linked polymer. Does not seem to be involved in protein degradation and may function as an antagonist of ubiquitin in the degradation process. Plays a role in a number of cellular processes such as nuclear transport, DNA replication and repair, mitosis and signal transduction. Covalent attachment to its substrates requires prior activation by the E1 complex sae1-sae2 and linkage to the E2 enzyme ube2i. The protein is Small ubiquitin-related modifier 3 (sumo3) of Danio rerio (Zebrafish).